The sequence spans 184 residues: UPF0149 protein PA14_69010 (184 aa).

Belongs to the UPF0149 family.

The chain is UPF0149 protein PA14_69010 from Pseudomonas aeruginosa (strain UCBPP-PA14).